The following is a 124-amino-acid chain: Small ribosomal subunit protein uS12 (124 aa).

Aspartate 89 bears the 3-methylthioaspartic acid mark. The tract at residues 105 to 124 (TGVDSRMQGRSKYGTKKPKK) is disordered.

This sequence belongs to the universal ribosomal protein uS12 family. As to quaternary structure, part of the 30S ribosomal subunit. Contacts proteins S8 and S17. May interact with IF1 in the 30S initiation complex.

In terms of biological role, with S4 and S5 plays an important role in translational accuracy. Interacts with and stabilizes bases of the 16S rRNA that are involved in tRNA selection in the A site and with the mRNA backbone. Located at the interface of the 30S and 50S subunits, it traverses the body of the 30S subunit contacting proteins on the other side and probably holding the rRNA structure together. The combined cluster of proteins S8, S12 and S17 appears to hold together the shoulder and platform of the 30S subunit. The polypeptide is Small ribosomal subunit protein uS12 (Vesicomyosocius okutanii subsp. Calyptogena okutanii (strain HA)).